The following is a 503-amino-acid chain: SWI/SNF and RSC complexes subunit ssr2 (503 aa).

The SWIRM domain maps to 18–115 (IIVPSYAGWF…YQIDPETRPA (98 aa)). Phosphoserine is present on S175. The segment at 188–242 (RVDKVCFTCGVNCSQTWYHNLKNKKYDICPNCYKQGRFSSSFNSSDFLCMDAIDF) adopts a ZZ-type; degenerate zinc-finger fold. 4 residues coordinate Zn(2+): C193, C196, C216, and C219. Residues 245–296 (DEEKPWSNQETLLLLEAIETYGDDWNQIALHVGSRTKEQCLIHFLQIPIEDP) form the SANT domain. Position 306 is a phosphoserine (S306).

It belongs to the SMARCC family. In terms of assembly, component of the RSC complex composed of at least arp9, arp42, rsc1, rsc4, rsc7, rsc9, rsc58, sfh1, snf21, ssr1, ssr2, ssr3 and ssr4. The complex interacts with histone and histone variant components of centromeric chromatin. Component of the SWI/SNF global transcription activator complex composed of at least arp9, arp42, snf5, snf22, snf30, sbf59, sol1, ssr1, ssr2, ssr3, ssr4 and tfg3.

The protein localises to the cytoplasm. The protein resides in the nucleus. Functionally, component of the chromatin structure remodeling complex (RSC), which is involved in transcription regulation and nucleosome positioning. Controls particularly membrane and organelle development genes. Part of the SWI/SNF complex, an ATP-dependent chromatin remodeling complex, required for the positive and negative regulation of gene expression of a large number of genes. It changes chromatin structure by altering DNA-histone contacts within a nucleosome, leading eventually to a change in nucleosome position, thus facilitating or repressing binding of gene-specific transcription factors. This Schizosaccharomyces pombe (strain 972 / ATCC 24843) (Fission yeast) protein is SWI/SNF and RSC complexes subunit ssr2 (ssr2).